We begin with the raw amino-acid sequence, 220 residues long: MELYLDTANVAEVERLARIFPIAGVTTNPSIVAASKESIWDVLPRLQNAIGEEGTLFAQTMSRNAKGMVEEAKRLNNAIPGIVVKIPVTAEGLAAIKLLKKEGIVTLGTAVYSASQGLLAALAGAKYVAPYVNRVDAQGGDGIRMVQELQTLLEHHAPDSMVLAASFKTPRQALDCLLAGCQAITLPLDVAQQMLNTPAVESAIEKFEQDWKNAFGNLNL.

Lys-85 (schiff-base intermediate with substrate) is an active-site residue.

This sequence belongs to the transaldolase family. Type 3A subfamily. Homodecamer.

The protein localises to the cytoplasm. It carries out the reaction beta-D-fructose 6-phosphate = dihydroxyacetone + D-glyceraldehyde 3-phosphate. Catalyzes the reversible formation of fructose 6-phosphate from dihydroxyacetone and D-glyceraldehyde 3-phosphate via an aldolization reaction. In Salmonella gallinarum (strain 287/91 / NCTC 13346), this protein is Fructose-6-phosphate aldolase.